The following is a 283-amino-acid chain: ATP synthase gamma chain (283 aa).

The protein belongs to the ATPase gamma chain family. F-type ATPases have 2 components, CF(1) - the catalytic core - and CF(0) - the membrane proton channel. CF(1) has five subunits: alpha(3), beta(3), gamma(1), delta(1), epsilon(1). CF(0) has three main subunits: a, b and c.

The protein localises to the cell membrane. Functionally, produces ATP from ADP in the presence of a proton gradient across the membrane. The gamma chain is believed to be important in regulating ATPase activity and the flow of protons through the CF(0) complex. This is ATP synthase gamma chain from Clostridium beijerinckii (strain ATCC 51743 / NCIMB 8052) (Clostridium acetobutylicum).